Consider the following 341-residue polypeptide: Farnesyl pyrophosphate synthase (341 aa).

K48, R51, and Q86 together coordinate isopentenyl diphosphate. Mg(2+)-binding residues include D93 and D97. Residue R102 coordinates dimethylallyl diphosphate. Residue R103 coordinates isopentenyl diphosphate. Residues K190, T191, Q229, and K246 each coordinate dimethylallyl diphosphate.

This sequence belongs to the FPP/GGPP synthase family. Mg(2+) serves as cofactor.

Its subcellular location is the cytoplasm. The enzyme catalyses isopentenyl diphosphate + dimethylallyl diphosphate = (2E)-geranyl diphosphate + diphosphate. The catalysed reaction is isopentenyl diphosphate + (2E)-geranyl diphosphate = (2E,6E)-farnesyl diphosphate + diphosphate. Its pathway is isoprenoid biosynthesis; farnesyl diphosphate biosynthesis; farnesyl diphosphate from geranyl diphosphate and isopentenyl diphosphate: step 1/1. It functions in the pathway isoprenoid biosynthesis; geranyl diphosphate biosynthesis; geranyl diphosphate from dimethylallyl diphosphate and isopentenyl diphosphate: step 1/1. In terms of biological role, catalyzes the sequential condensation of isopentenyl pyrophosphate with the allylic pyrophosphates, dimethylallyl pyrophosphate, and then with the resultant geranylpyrophosphate to the ultimate product farnesyl pyrophosphate. This Helianthus annuus (Common sunflower) protein is Farnesyl pyrophosphate synthase (FPS1).